Consider the following 379-residue polypeptide: Cytochrome b (379 aa).

4 consecutive transmembrane segments (helical) span residues 34-54, 78-99, 114-134, and 179-199; these read LGSLLGMCLMIQIVTGLFLTM, WLIRTLHANGASMFFICMYLHV, WMTGTIILFLVMATAFMGYVL, and FYTFHFVLPFIVMAMVMIHLF. The heme b site is built by histidine 84 and histidine 98. Heme b contacts are provided by histidine 183 and histidine 197. Histidine 202 is an a ubiquinone binding site. A run of 4 helical transmembrane segments spans residues 227-247, 289-309, 321-341, and 348-368; these read YKDMITFIILMMILIMLCLID, LGGVIALVMSISILMIMPFYN, MNQIMFWIMVIVICLLTWIGK, and YIMTGQILTIIYFSYFLFNVH.

It belongs to the cytochrome b family. The main subunits of complex b-c1 are: cytochrome b, cytochrome c1 and the Rieske protein. Heme b serves as cofactor.

The protein resides in the mitochondrion inner membrane. In terms of biological role, component of the ubiquinol-cytochrome c reductase complex (complex III or cytochrome b-c1 complex) that is part of the mitochondrial respiratory chain. The b-c1 complex mediates electron transfer from ubiquinol to cytochrome c. Contributes to the generation of a proton gradient across the mitochondrial membrane that is then used for ATP synthesis. This Locusta migratoria (Migratory locust) protein is Cytochrome b (MT-CYB).